We begin with the raw amino-acid sequence, 93 residues long: MGKLDETMFFDFGDNKQNDVRETLKTVYDALEEKGYNPIDQIVGYLISGDPAYIPRLNDARNLIRKHQRDEIIEELVRYYLSEQIADSKKEEN.

The protein belongs to the UPF0297 family.

The chain is UPF0297 protein PEPE_1262 from Pediococcus pentosaceus (strain ATCC 25745 / CCUG 21536 / LMG 10740 / 183-1w).